The primary structure comprises 502 residues: Acetylcholine receptor subunit alpha-type unc-63 (502 aa).

Positions 1-23 are cleaved as a signal peptide; the sequence is MGPNDHGFAYILIFLLLSPPTHA. The Extracellular segment spans residues 24–263; the sequence is NRDANRLFED…HLRRKTLFYT (240 aa). Residue asparagine 136 is glycosylated (N-linked (GlcNAc...) asparagine). Cysteines 151 and 165 form a disulfide. Helical transmembrane passes span 264–284, 293–313, and 326–346; these read VNLIFPSVGISFLTALVFYLP, LCISILISLTVFFLLLVEIIP, and LLFTMVLVTLSVVVTVVTLNV. The Cytoplasmic segment spans residues 347 to 470; sequence HYRSPTTHTM…WKYISVVMDR (124 aa). A helical transmembrane segment spans residues 471–491; sequence IFLITFTFACAFGTVVIIARA.

The protein belongs to the ligand-gated ion channel (TC 1.A.9) family. Acetylcholine receptor (TC 1.A.9.1) subfamily. Component of nicotinic acetylcholine receptor. In muscles, composed of 2 non-alpha subunits lev-1 and unc-29, and 3 alpha subunits unc-38, unc-63 and lev-8. In cholinergic motoneurons, composed of 2 non-alpha subunits acr-2 and acr-3, and 3 alpha subunits unc-38, unc-63 and acr-12. Interacts with lev-10. In terms of tissue distribution, expressed in body wall muscles, in vulval muscles and in neurons.

Its subcellular location is the postsynaptic cell membrane. It localises to the cell membrane. Alpha subunit of nicotinic acetylcholine receptor (nAChR). Probably acts in cholinergic motoneurons to regulate presynaptic neurotransmitter release, thereby ensuring normal level of excitation of cholinergic motoneurons during locomotion. Involved in nAChR sensitivity to nicotine and levamisole. In Caenorhabditis elegans, this protein is Acetylcholine receptor subunit alpha-type unc-63 (unc-63).